The chain runs to 807 residues: Oxysterol-binding protein 1 (807 aa).

A2 is modified (N-acetylalanine). The disordered stretch occupies residues 61–86; sequence GAGGVAAAGPAPAPPTGGSGGSGAGG. Residues 77–86 are compositionally biased toward gly residues; it reads GGSGGSGAGG. The PH domain maps to 88–181; sequence GSAREGWLFK…WVTALELAKA (94 aa). Residue 117–122 participates in a 1,2-diacyl-sn-glycero-3-phospho-(1D-myo-inositol 4-phosphate) binding; the sequence is LSYYRS. Residues S190, S193, S198, S238, and S240 each carry the phosphoserine modification. Residues 291–326 are a coiled coil; the sequence is QKSLQYERDQRIRLEETLEQLAKQHNHLERAFRGAT. Q314 contacts 20-hydroxycholesterol. Q314 is a binding site for 25-hydroxycholesterol. Q314 contacts 7beta-hydroxycholesterol. Residue Q314 coordinates cholesterol. Q314 is an ergosterol binding site. The segment at 329 to 353 is disordered; that stretch reads PANTPGNVGSGKDQCCSGKGDMSDE. S338, S345, and S351 each carry phosphoserine. The FFAT signature appears at 358-364; sequence EFFDAPE. Residue T377 is modified to Phosphothreonine. S379, S382, S385, S386, and S389 each carry phosphoserine. Residues 493 to 496 and 522 to 523 each bind a 1,2-diacyl-sn-glycero-3-phospho-(1D-myo-inositol 4-phosphate); these read KPFN and HH. The segment at 710–759 is disordered; it reads TAPTDSRLRPDQRLMENGRWDEANAEKQRLEEKQRLSRKKREAEAMKATE. Basic and acidic residues predominate over residues 715-759; that stretch reads SRLRPDQRLMENGRWDEANAEKQRLEEKQRLSRKKREAEAMKATE. Positions 730 to 760 form a coiled coil; it reads DEANAEKQRLEEKQRLSRKKREAEAMKATED.

This sequence belongs to the OSBP family. As to quaternary structure, homodimer or homotrimer. Interacts (via FFAT motif) with VAPA. Interacts (via C-terminus) with RELCH (via the third HEAT repeat). Found in a complex composed of RELCH, OSBP1 and RAB11A. In terms of tissue distribution, widely expressed.

Its subcellular location is the cytoplasm. The protein resides in the cytosol. The protein localises to the perinuclear region. It localises to the golgi apparatus membrane. It is found in the endoplasmic reticulum membrane. Its subcellular location is the golgi apparatus. The protein resides in the trans-Golgi network. Functionally, lipid transporter involved in lipid countertransport between the Golgi complex and membranes of the endoplasmic reticulum: specifically exchanges sterol with phosphatidylinositol 4-phosphate (PI4P), delivering sterol to the Golgi in exchange for PI4P, which is degraded by the SAC1/SACM1L phosphatase in the endoplasmic reticulum. Binds cholesterol and a range of oxysterols including 25-hydroxycholesterol. Cholesterol binding promotes the formation of a complex with PP2A and a tyrosine phosphatase which dephosphorylates ERK1/2, whereas 25-hydroxycholesterol causes its disassembly. Regulates cholesterol efflux by decreasing ABCA1 stability. This Homo sapiens (Human) protein is Oxysterol-binding protein 1.